A 440-amino-acid chain; its full sequence is Chromosomal replication initiator protein DnaA (440 aa).

Residues 1-75 (MNPNQILENL…QSGNKASVLI (75 aa)) are domain I, interacts with DnaA modulators. The segment at 75 to 99 (IQAQSAKQSSKSTKIDIAHIKAQST) is domain II. The tract at residues 100–316 (ILNPSFTFES…GIIISLNAYA (217 aa)) is domain III, AAA+ region. ATP is bound by residues glycine 146, glycine 148, lysine 149, and threonine 150. The tract at residues 317 to 440 (TILGQEITLE…KNKILVKSQS (124 aa)) is domain IV, binds dsDNA.

The protein belongs to the DnaA family. Oligomerizes as a right-handed, spiral filament on DNA at oriC.

The protein localises to the cytoplasm. In terms of biological role, plays an essential role in the initiation and regulation of chromosomal replication. ATP-DnaA binds to the origin of replication (oriC) to initiate formation of the DNA replication initiation complex once per cell cycle. Binds the DnaA box (a 9 base pair repeat at the origin) and separates the double-stranded (ds)DNA. Forms a right-handed helical filament on oriC DNA; dsDNA binds to the exterior of the filament while single-stranded (ss)DNA is stabiized in the filament's interior. The ATP-DnaA-oriC complex binds and stabilizes one strand of the AT-rich DNA unwinding element (DUE), permitting loading of DNA polymerase. After initiation quickly degrades to an ADP-DnaA complex that is not apt for DNA replication. Binds acidic phospholipids. The chain is Chromosomal replication initiator protein DnaA from Campylobacter jejuni subsp. jejuni serotype O:6 (strain 81116 / NCTC 11828).